The following is a 234-amino-acid chain: uncharacterized protein (234 aa).

L-glutamine is bound at residue 68-70; the sequence is GES. Catalysis depends on Cys101, which acts as the Nucleophile. Residues Arg131 and 167–168 contribute to the L-glutamine site; that span reads IR. Catalysis depends on charge relay system residues His208 and Glu210.

It belongs to the glutaminase PdxT/SNO family.

It is found in the cytoplasm. The catalysed reaction is L-glutamine + H2O = L-glutamate + NH4(+). This is an uncharacterized protein from Schizosaccharomyces pombe (strain 972 / ATCC 24843) (Fission yeast).